Here is a 151-residue protein sequence, read N- to C-terminus: SsrA-binding protein (151 aa).

The disordered stretch occupies residues 131–151 (KRESIKEKDWKRDQSRLIRQK).

This sequence belongs to the SmpB family.

It localises to the cytoplasm. Functionally, required for rescue of stalled ribosomes mediated by trans-translation. Binds to transfer-messenger RNA (tmRNA), required for stable association of tmRNA with ribosomes. tmRNA and SmpB together mimic tRNA shape, replacing the anticodon stem-loop with SmpB. tmRNA is encoded by the ssrA gene; the 2 termini fold to resemble tRNA(Ala) and it encodes a 'tag peptide', a short internal open reading frame. During trans-translation Ala-aminoacylated tmRNA acts like a tRNA, entering the A-site of stalled ribosomes, displacing the stalled mRNA. The ribosome then switches to translate the ORF on the tmRNA; the nascent peptide is terminated with the 'tag peptide' encoded by the tmRNA and targeted for degradation. The ribosome is freed to recommence translation, which seems to be the essential function of trans-translation. In Rickettsia bellii (strain OSU 85-389), this protein is SsrA-binding protein.